A 227-amino-acid chain; its full sequence is DNA mismatch repair protein MutH (227 aa).

The protein belongs to the MutH family.

It localises to the cytoplasm. In terms of biological role, sequence-specific endonuclease that cleaves unmethylated GATC sequences. It is involved in DNA mismatch repair. In Vibrio vulnificus (strain CMCP6), this protein is DNA mismatch repair protein MutH.